An 83-amino-acid chain; its full sequence is Small ribosomal subunit protein bS20 (83 aa).

Belongs to the bacterial ribosomal protein bS20 family.

Binds directly to 16S ribosomal RNA. The chain is Small ribosomal subunit protein bS20 from Flavobacterium johnsoniae (strain ATCC 17061 / DSM 2064 / JCM 8514 / BCRC 14874 / CCUG 350202 / NBRC 14942 / NCIMB 11054 / UW101) (Cytophaga johnsonae).